The following is a 481-amino-acid chain: MDGAVMEGPLFLQSQRFGTKRWRKTWAVLYPASPHGVARLEFFDHKGSSSGGGRGSSRRLDCKVIRLAECVSVAPVTVETPPEPGATAFRLDTAQRSHLLAADAPSSAAWVQTLCRNAFPKGSWTLAPTDNPPKLSALEMLENSLYSPTWEGSQFWVTVQRTEAAERCGLHGSYVLRVEAERLTLLTVGAQSQILEPLLSWPYTLLRRYGRDKVMFSFEAGRRCPSGPGTFTFQTAQGNDIFQAVETAIHRQKAQGKAGQGHDVLRADSHEGEVAEGKLPSPPGPQELLDSPPALYAEPLDSLRIAPCPSQDSLYSDPLDSTSAQAGEGVQRKKPLYWDLYEHAQQQLLKAKLTDPKEDPIYDEPEGLAPVPPQGLYDLPREPKDAWWCQARVKEEGYELPYNPATDDYAVPPPRSTKPLLAPKPQGPAFPEPGTATGSGIKSHNSALYSQVQKSGASGSWDCGLSRVGTDKTGVKSEGST.

Residue Met-1 is modified to N-acetylmethionine. Residues 4–119 (AVMEGPLFLQ…WVQTLCRNAF (116 aa)) form the PH domain. A Phosphoserine modification is found at Ser-48. Residues 151–259 (EGSQFWVTVQ…HRQKAQGKAG (109 aa)) enclose the IRS-type PTB domain. 2 positions are modified to phosphoserine: Ser-269 and Ser-291. The tract at residues 270 to 293 (HEGEVAEGKLPSPPGPQELLDSPP) is disordered. A Phosphotyrosine modification is found at Tyr-296. Residues 307–329 (PCPSQDSLYSDPLDSTSAQAGEG) form a disordered region. A compositionally biased stretch (polar residues) spans 310–325 (SQDSLYSDPLDSTSAQ). 2 positions are modified to phosphotyrosine: Tyr-337 and Tyr-341. Tyr-362 carries the post-translational modification Phosphotyrosine; by INSR. Tyr-377 is subject to Phosphotyrosine. Tyr-398 is modified (phosphotyrosine; by INSR). Positions 404–481 (PATDDYAVPP…KTGVKSEGST (78 aa)) are disordered. Tyr-409 carries the phosphotyrosine modification. Position 416 is a phosphoserine (Ser-416). The segment covering 436 to 458 (ATGSGIKSHNSALYSQVQKSGAS) has biased composition (polar residues). At Tyr-449 the chain carries Phosphotyrosine. Ser-460 carries the phosphoserine modification.

Belongs to the DOK family. Type A subfamily. Interacts with ABL1. Interacts with RasGAP and INPP5D/SHIP1. Interacts directly with phosphorylated ITGB3. Interacts with SRMS (via the SH2 and SH3 domains). In terms of processing, constitutively tyrosine-phosphorylated. Phosphorylated by TEC. Phosphorylated by LYN. Phosphorylated on tyrosine residues by the insulin receptor kinase. Results in the negative regulation of the insulin signaling pathway. Phosphorylated on tyrosine residues by SRMS. As to expression, expressed in pancreas, heart, leukocyte and spleen. Expressed in both resting and activated peripheral blood T-cells. Expressed in breast cancer.

It localises to the cytoplasm. The protein localises to the nucleus. The protein resides in the perinuclear region. Its function is as follows. DOK proteins are enzymatically inert adaptor or scaffolding proteins. They provide a docking platform for the assembly of multimolecular signaling complexes. DOK1 appears to be a negative regulator of the insulin signaling pathway. Modulates integrin activation by competing with talin for the same binding site on ITGB3. This Homo sapiens (Human) protein is Docking protein 1 (DOK1).